The following is a 130-amino-acid chain: Large ribosomal subunit protein bL12 (130 aa).

Belongs to the bacterial ribosomal protein bL12 family. As to quaternary structure, homodimer. Part of the ribosomal stalk of the 50S ribosomal subunit. Forms a multimeric L10(L12)X complex, where L10 forms an elongated spine to which 2 to 4 L12 dimers bind in a sequential fashion. Binds GTP-bound translation factors.

Functionally, forms part of the ribosomal stalk which helps the ribosome interact with GTP-bound translation factors. Is thus essential for accurate translation. This is Large ribosomal subunit protein bL12 from Nostoc sp. (strain PCC 7120 / SAG 25.82 / UTEX 2576).